The chain runs to 97 residues: uncharacterized protein (97 aa).

The segment covering 1-20 (MAKEQTDRTTLDLFAHERRP) has biased composition (basic and acidic residues). The disordered stretch occupies residues 1 to 30 (MAKEQTDRTTLDLFAHERRPGRPKTNPLSR).

This is an uncharacterized protein from Escherichia coli O157:H7.